The sequence spans 499 residues: Guanosine-5'-triphosphate,3'-diphosphate pyrophosphatase (499 aa).

This sequence belongs to the GppA/Ppx family. GppA subfamily.

The catalysed reaction is guanosine 3'-diphosphate 5'-triphosphate + H2O = guanosine 3',5'-bis(diphosphate) + phosphate + H(+). It participates in purine metabolism; ppGpp biosynthesis; ppGpp from GTP: step 2/2. Functionally, catalyzes the conversion of pppGpp to ppGpp. Guanosine pentaphosphate (pppGpp) is a cytoplasmic signaling molecule which together with ppGpp controls the 'stringent response', an adaptive process that allows bacteria to respond to amino acid starvation, resulting in the coordinated regulation of numerous cellular activities. The sequence is that of Guanosine-5'-triphosphate,3'-diphosphate pyrophosphatase from Klebsiella pneumoniae subsp. pneumoniae (strain ATCC 700721 / MGH 78578).